Consider the following 242-residue polypeptide: HTH-type transcriptional regulator GadW (242 aa).

Residues 139–236 form the HTH araC/xylS-type domain; it reads GKVERLISFD…GVTPHQFAQH (98 aa). DNA-binding regions (H-T-H motif) lie at residues 156 to 177 and 203 to 226; these read RDIA…QDEN and LHTI…RQYY.

Homodimer.

Its function is as follows. Depending on the conditions (growth phase and medium), acts as a positive or negative regulator of gadA and gadBC. Repression occurs directly or via the repression of the expression of gadX. Activation occurs directly by the binding of GadW to the gadA and gadBC promoters. The polypeptide is HTH-type transcriptional regulator GadW (gadW) (Escherichia coli (strain K12)).